A 129-amino-acid polypeptide reads, in one-letter code: uncharacterized protein (129 aa).

Disordered regions lie at residues 1–57 and 87–129; these read MGGG…LPNH and PVSS…WLWW. A compositionally biased stretch (basic and acidic residues) spans 10–20; it reads SGEERREKRSG. Residues 87–99 are compositionally biased toward low complexity; sequence PVSSSPSRSPSSS.

This is an uncharacterized protein from Homo sapiens (Human).